The primary structure comprises 951 residues: Valine--tRNA ligase (951 aa).

A 'HIGH' region motif is present at residues 42–52 (PNVTGSLHMGH). Residues 554-558 (KMSKS) carry the 'KMSKS' region motif. Residue lysine 557 participates in ATP binding. Residues 880 to 944 (AGLINKEDEL…AEAKAKLIEQ (65 aa)) are a coiled coil.

This sequence belongs to the class-I aminoacyl-tRNA synthetase family. ValS type 1 subfamily. Monomer.

It localises to the cytoplasm. It catalyses the reaction tRNA(Val) + L-valine + ATP = L-valyl-tRNA(Val) + AMP + diphosphate. Catalyzes the attachment of valine to tRNA(Val). As ValRS can inadvertently accommodate and process structurally similar amino acids such as threonine, to avoid such errors, it has a 'posttransfer' editing activity that hydrolyzes mischarged Thr-tRNA(Val) in a tRNA-dependent manner. The protein is Valine--tRNA ligase of Salmonella paratyphi A (strain ATCC 9150 / SARB42).